A 999-amino-acid polypeptide reads, in one-letter code: Probable metabotropic glutamate receptor mgl-1 (999 aa).

L-glutamate is bound by residues serine 202, 223–225, tyrosine 273, glutamate 363, and lysine 455; that span reads AST. An N-linked (GlcNAc...) asparagine glycan is attached at asparagine 518. A run of 7 helical transmembrane segments spans residues 682 to 704, 719 to 739, 751 to 769, 792 to 812, 836 to 857, 871 to 893, and 904 to 929; these read SLVP…VVYV, LSYI…VLLS, TGIG…VKTN, VVMT…WLSV, HHFL…TYAV, FIGF…FFGT, and LCIS…IILF. Residues 975–999 are disordered; that stretch reads DSTRRRSSRKTSQPTSTSSAHDTFL. The segment covering 984–993 has biased composition (low complexity); that stretch reads KTSQPTSTSS.

Belongs to the G-protein coupled receptor 3 family.

The protein localises to the cell membrane. Its function is as follows. G-protein coupled receptor for glutamate. Ligand binding causes a conformation change that triggers signaling via guanine nucleotide-binding proteins (G proteins) and modulates the activity of down-stream effectors. This is Probable metabotropic glutamate receptor mgl-1 (mgl-1) from Caenorhabditis elegans.